The following is a 698-amino-acid chain: Phenylalanine aminomutase (L-beta-phenylalanine forming) (698 aa).

Residue Y80 is the Proton donor/acceptor of the active site. The 5-imidazolinone (Ala-Gly) cross-link spans 175–177 (ASG). S176 carries the post-translational modification 2,3-didehydroalanine (Ser). N231, Q319, R325, N355, K427, E455, and N458 together coordinate (E)-cinnamate.

The protein belongs to the PAL/histidase family. As to quaternary structure, homotetramer. Contains an active site 4-methylidene-imidazol-5-one (MIO), which is formed autocatalytically by cyclization and dehydration of residues Ala-Ser-Gly.

It is found in the cytoplasm. The enzyme catalyses L-phenylalanine = L-beta-phenylalanine. It catalyses the reaction L-phenylalanine = (E)-cinnamate + NH4(+). It functions in the pathway alkaloid biosynthesis; taxol biosynthesis. Its pathway is phenylpropanoid metabolism; trans-cinnamate biosynthesis; trans-cinnamate from L-phenylalanine: step 1/1. Functionally, phenylalanine aminomutase that catalyzes the rearrangement of L-phenylalanine to R-beta-phenylalanine. Catalyzes the first committed step in the biosynthesis of the side chain of the alkaloid taxol (paclitaxel), a widely-used compound with antitumor activity. Also has low phenylalanine ammonia-lyase activity. This Taxus canadensis (Canadian yew) protein is Phenylalanine aminomutase (L-beta-phenylalanine forming) (pam).